A 189-amino-acid polypeptide reads, in one-letter code: uncharacterized protein (189 aa).

The next 4 membrane-spanning stretches (helical) occupy residues 35 to 55 (IIWY…AVMK), 97 to 117 (GVLQ…ALHF), 123 to 143 (WLLF…YEWT), and 144 to 164 (GNLF…ACQI).

Its subcellular location is the cell membrane. This is an uncharacterized protein from Bacillus subtilis (strain 168).